Consider the following 390-residue polypeptide: UPF0229 protein OB2647 (390 aa).

The tract at residues 99–121 (NASQQGQQGQGNGKKAGDQPGTD) is disordered.

Belongs to the UPF0229 family.

In Oceanobacillus iheyensis (strain DSM 14371 / CIP 107618 / JCM 11309 / KCTC 3954 / HTE831), this protein is UPF0229 protein OB2647.